Here is a 555-residue protein sequence, read N- to C-terminus: 2-isopropylmalate synthase (555 aa).

Residues 30-303 (PIWCSVDLRD…DPGLDCTDIN (274 aa)) form the Pyruvate carboxyltransferase domain. 4 residues coordinate Mg(2+): aspartate 39, histidine 242, histidine 244, and asparagine 278. Positions 437–555 (QPDARIKFVD…VSAANRVIAK (119 aa)) are regulatory domain.

Belongs to the alpha-IPM synthase/homocitrate synthase family. LeuA type 2 subfamily. Homodimer. It depends on Mg(2+) as a cofactor.

The protein localises to the cytoplasm. It catalyses the reaction 3-methyl-2-oxobutanoate + acetyl-CoA + H2O = (2S)-2-isopropylmalate + CoA + H(+). Its pathway is amino-acid biosynthesis; L-leucine biosynthesis; L-leucine from 3-methyl-2-oxobutanoate: step 1/4. Functionally, catalyzes the condensation of the acetyl group of acetyl-CoA with 3-methyl-2-oxobutanoate (2-ketoisovalerate) to form 3-carboxy-3-hydroxy-4-methylpentanoate (2-isopropylmalate). The polypeptide is 2-isopropylmalate synthase (Brucella melitensis biotype 1 (strain ATCC 23456 / CCUG 17765 / NCTC 10094 / 16M)).